Here is a 510-residue protein sequence, read N- to C-terminus: Bifunctional purine biosynthesis protein PurH (510 aa).

In terms of domain architecture, MGS-like spans 1 to 143 (MTKRALISVS…KNHSGVLVLV (143 aa)).

This sequence belongs to the PurH family.

The catalysed reaction is (6R)-10-formyltetrahydrofolate + 5-amino-1-(5-phospho-beta-D-ribosyl)imidazole-4-carboxamide = 5-formamido-1-(5-phospho-D-ribosyl)imidazole-4-carboxamide + (6S)-5,6,7,8-tetrahydrofolate. The enzyme catalyses IMP + H2O = 5-formamido-1-(5-phospho-D-ribosyl)imidazole-4-carboxamide. The protein operates within purine metabolism; IMP biosynthesis via de novo pathway; 5-formamido-1-(5-phospho-D-ribosyl)imidazole-4-carboxamide from 5-amino-1-(5-phospho-D-ribosyl)imidazole-4-carboxamide (10-formyl THF route): step 1/1. It participates in purine metabolism; IMP biosynthesis via de novo pathway; IMP from 5-formamido-1-(5-phospho-D-ribosyl)imidazole-4-carboxamide: step 1/1. The polypeptide is Bifunctional purine biosynthesis protein PurH (Deinococcus deserti (strain DSM 17065 / CIP 109153 / LMG 22923 / VCD115)).